A 497-amino-acid polypeptide reads, in one-letter code: Probable zinc metalloprotease TRV_03476 (497 aa).

Positions 1–24 (MRFLISSLLSGLALLTSLHAFVLA) are cleaved as a signal peptide. N100 and N121 each carry an N-linked (GlcNAc...) asparagine glycan. Residues H171, D191, and E227 each coordinate Zn(2+). The N-linked (GlcNAc...) asparagine glycan is linked to N242. Residue D254 participates in Zn(2+) binding. In terms of domain architecture, Fibronectin type-III spans 411–497 (MPRNVRVNTN…ERGVAVLPFP (87 aa)). N424 carries an N-linked (GlcNAc...) asparagine glycan.

This sequence belongs to the peptidase M28 family. M28B subfamily. Zn(2+) is required as a cofactor.

It is found in the secreted. This chain is Probable zinc metalloprotease TRV_03476, found in Trichophyton verrucosum (strain HKI 0517).